The following is a 362-amino-acid chain: Heat-inducible transcription repressor HrcA (362 aa).

This sequence belongs to the HrcA family.

In terms of biological role, negative regulator of class I heat shock genes (grpE-dnaK-dnaJ and groELS operons). Prevents heat-shock induction of these operons. The chain is Heat-inducible transcription repressor HrcA from Nitrobacter hamburgensis (strain DSM 10229 / NCIMB 13809 / X14).